A 314-amino-acid chain; its full sequence is Phosphoribosylaminoimidazole-succinocarboxamide synthase (314 aa).

It belongs to the SAICAR synthetase family.

The catalysed reaction is 5-amino-1-(5-phospho-D-ribosyl)imidazole-4-carboxylate + L-aspartate + ATP = (2S)-2-[5-amino-1-(5-phospho-beta-D-ribosyl)imidazole-4-carboxamido]succinate + ADP + phosphate + 2 H(+). The protein operates within purine metabolism; IMP biosynthesis via de novo pathway; 5-amino-1-(5-phospho-D-ribosyl)imidazole-4-carboxamide from 5-amino-1-(5-phospho-D-ribosyl)imidazole-4-carboxylate: step 1/2. This is Phosphoribosylaminoimidazole-succinocarboxamide synthase from Bacteroides fragilis (strain ATCC 25285 / DSM 2151 / CCUG 4856 / JCM 11019 / LMG 10263 / NCTC 9343 / Onslow / VPI 2553 / EN-2).